Consider the following 463-residue polypeptide: Protein translocase subunit SecY (463 aa).

Residues 1–20 lie on the Cytoplasmic side of the membrane; the sequence is MGFMDFLAKMGENLPAVSKP. A helical membrane pass occupies residues 21–47; sequence KDKPTLTRKLLWTFIGLIVYLLMASIP. At 48 to 60 the chain is on the extracellular side; it reads LYGVTSSNSFLSN. Positions 61 to 68 form an intramembrane region, helical; the sequence is FLAQQIIF. A discontinuously helical transmembrane segment spans residues 61–89; that stretch reads FLAQQIIFASSQGTLAQLGIGPVITSGLI. The stretch at 69-80 is an intramembrane region; sequence ASSQGTLAQLGI. The helical intramembrane region spans 81–89; it reads GPVITSGLI. The Cytoplasmic segment spans residues 90 to 110; the sequence is MQILVGSKLINVDLTTQEGKS. Residues 111–134 form a helical membrane-spanning segment; that stretch reads KFTQAEKALALIFIIVESSLFGYV. Residues 135–142 are Extracellular-facing; it reads FTRATSNI. The helical transmembrane segment at 143–167 threads the bilayer; the sequence is LLPIIVVVQLIIASYIILLLDEMIQ. Topologically, residues 168–174 are cytoplasmic; that stretch reads KGWGLGS. The helical transmembrane segment at 175–193 threads the bilayer; that stretch reads GVSLFIMAGIMKVIFWNMF. Residues 194 to 236 lie on the Extracellular side of the membrane; it reads GIVSVQSQNLPVGFFPLLVSYITSGRNLQEIVLNTSSTTPYQP. The helical transmembrane segment at 237 to 258 threads the bilayer; it reads DLIGLIATVGLTILIVYLVNTN. At 259-283 the chain is on the cytoplasmic side; sequence IYIPVTTQRLRGIRTTVPLNFLYVS. A helical membrane pass occupies residues 284–305; sequence SIPVIFVSVLGADIQLFASLAN. Topologically, residues 306–341 are extracellular; that stretch reads SISNSASGILTDIANAFFFPPQGVPHSVYALVVDPV. Residues 342 to 361 traverse the membrane as a helical segment; that stretch reads GAAIYAAVFIVLSIVFGMLW. The Cytoplasmic portion of the chain corresponds to 362-404; sequence IDVAGLDPKTQAEQMIRSGIEIPGMRTNPRIIEGILSKYIYAL. Residues 405-423 form a helical membrane-spanning segment; sequence GFFSSLIVGLIAVVATFLG. Over 424-426 the chain is Extracellular; sequence TYG. The helical transmembrane segment at 427–441 threads the bilayer; sequence TGVGLLLAITIAMQY. Over 442–463 the chain is Cytoplasmic; that stretch reads YNLLAYERTLEMYPLLKRIVGE.

It belongs to the SecY/SEC61-alpha family. Component of the Sec protein translocase complex. Heterotrimer consisting of alpha (SecY), beta (SecG) and gamma (SecE) subunits. The heterotrimers can form oligomers, although 1 heterotrimer is thought to be able to translocate proteins. Interacts with the ribosome. May interact with SecDF, and other proteins may be involved.

The protein resides in the cell membrane. Its function is as follows. The central subunit of the protein translocation channel SecYEG. Consists of two halves formed by TMs 1-5 and 6-10. These two domains form a lateral gate at the front which open onto the bilayer between TMs 2 and 7, and are clamped together by SecE at the back. The channel is closed by both a pore ring composed of hydrophobic SecY resides and a short helix (helix 2A) on the extracellular side of the membrane which forms a plug. The plug probably moves laterally to allow the channel to open. The ring and the pore may move independently. The polypeptide is Protein translocase subunit SecY (Sulfolobus acidocaldarius (strain ATCC 33909 / DSM 639 / JCM 8929 / NBRC 15157 / NCIMB 11770)).